A 316-amino-acid polypeptide reads, in one-letter code: UDP-N-acetylenolpyruvoylglucosamine reductase (316 aa).

Residues 27–225 (VGGKAERFYR…KTAINALLKK (199 aa)) form the FAD-binding PCMH-type domain. Residue Arg-190 is part of the active site. Ser-239 serves as the catalytic Proton donor. Glu-309 is an active-site residue.

This sequence belongs to the MurB family. FAD serves as cofactor.

Its subcellular location is the cytoplasm. The catalysed reaction is UDP-N-acetyl-alpha-D-muramate + NADP(+) = UDP-N-acetyl-3-O-(1-carboxyvinyl)-alpha-D-glucosamine + NADPH + H(+). Its pathway is cell wall biogenesis; peptidoglycan biosynthesis. Its function is as follows. Cell wall formation. This Coxiella burnetii (strain CbuK_Q154) (Coxiella burnetii (strain Q154)) protein is UDP-N-acetylenolpyruvoylglucosamine reductase.